A 267-amino-acid polypeptide reads, in one-letter code: V-type proton ATPase subunit D (267 aa).

This sequence belongs to the V-ATPase D subunit family. V-ATPase is a heteromultimeric enzyme composed of a peripheral catalytic V1 complex (components A to H) attached to an integral membrane V0 proton pore complex (components: a, c, c', c'', d, e, f and VOA1).

The protein resides in the vacuole membrane. Its function is as follows. Subunit of the V1 complex of vacuolar(H+)-ATPase (V-ATPase), a multisubunit enzyme composed of a peripheral complex (V1) that hydrolyzes ATP and a membrane integral complex (V0) that translocates protons. V-ATPase is responsible for acidifying and maintaining the pH of intracellular compartments. This Candida albicans (strain SC5314 / ATCC MYA-2876) (Yeast) protein is V-type proton ATPase subunit D (VMA8).